Consider the following 281-residue polypeptide: Large ribosomal subunit protein uL2 (281 aa).

Disordered stretches follow at residues 1–23 and 224–281; these read MAVK…DYSK and RGSV…KDSK. Positions 12–23 are enriched in polar residues; it reads GRRNMSSLDYSK. Residues 261 to 281 are compositionally biased toward basic residues; sequence KTRKTKKSSTKLILRRRKDSK.

This sequence belongs to the universal ribosomal protein uL2 family. As to quaternary structure, part of the 50S ribosomal subunit. Forms a bridge to the 30S subunit in the 70S ribosome.

In terms of biological role, one of the primary rRNA binding proteins. Required for association of the 30S and 50S subunits to form the 70S ribosome, for tRNA binding and peptide bond formation. It has been suggested to have peptidyltransferase activity; this is somewhat controversial. Makes several contacts with the 16S rRNA in the 70S ribosome. This Mycoplasmopsis agalactiae (strain NCTC 10123 / CIP 59.7 / PG2) (Mycoplasma agalactiae) protein is Large ribosomal subunit protein uL2.